The primary structure comprises 114 residues: Amphinase-2 (114 aa).

Histidine 15 serves as the catalytic Proton acceptor. 4 disulfides stabilise this stretch: cysteine 26-cysteine 79, cysteine 41-cysteine 85, cysteine 59-cysteine 100, and cysteine 97-cysteine 114. Asparagine 27 is a glycosylation site (N-linked (GlcNAc...) asparagine). 42–46 is a binding site for substrate; sequence KPINT. N-linked (GlcNAc...) asparagine glycans are attached at residues asparagine 67 and asparagine 91. Histidine 107 acts as the Proton donor in catalysis.

This sequence belongs to the pancreatic ribonuclease family. In terms of assembly, monomer. In terms of processing, there are at least four different forms arising from glycan heterogeneity.

The protein localises to the secreted. Its function is as follows. Endonuclease, hydrolyzes highly polymerized RNA, poly(U) and poly(C), and the dinucleotides CpA and UpA. Hydrolyzes 18S and 28S ribosomal RNA. More active towards rCA than rUA or rUG. Has cytotoxic activity against cultured human submaxillary gland carcinoma cells. This chain is Amphinase-2, found in Lithobates pipiens (Northern leopard frog).